The sequence spans 318 residues: MIEALKPLVLAAVVTLILGPPVLAFLRRLKAGQTVRSDGPRSHLAKAGTPTMGGVLFLIGLTVSTLVLAPPSPLTLSTLILTWGYALIGLVDDGLKVILHRPLGLMARQKLGGQVLLGLVAGVAAMLWLGRGSVIQVPVTGWHWDLGWYYPLLAALLLVATTNAVNLTDGLDGLAAGITLWVALAYGILALTLGQGELVTFAMALAGGCLGFLVYNFHPARVFMGDTGSLALGAAIGFLAIMTRTELVLPVLGGVYVLETLSVILQVVSFRLTGRRLFRMSPLHHHFELGGWPESRVVLFFWALAIIMALAGLYLLTI.

Helical transmembrane passes span leucine 5–phenylalanine 25, proline 50–proline 70, proline 71–valine 91, valine 115–isoleucine 135, valine 139–valine 159, glycine 173–leucine 193, leucine 198–histidine 218, valine 222–methionine 242, valine 248–valine 268, and valine 298–isoleucine 318.

The protein belongs to the glycosyltransferase 4 family. MraY subfamily. Mg(2+) serves as cofactor.

The protein localises to the cell membrane. The catalysed reaction is UDP-N-acetyl-alpha-D-muramoyl-L-alanyl-gamma-D-glutamyl-meso-2,6-diaminopimeloyl-D-alanyl-D-alanine + di-trans,octa-cis-undecaprenyl phosphate = di-trans,octa-cis-undecaprenyl diphospho-N-acetyl-alpha-D-muramoyl-L-alanyl-D-glutamyl-meso-2,6-diaminopimeloyl-D-alanyl-D-alanine + UMP. Its pathway is cell wall biogenesis; peptidoglycan biosynthesis. In terms of biological role, catalyzes the initial step of the lipid cycle reactions in the biosynthesis of the cell wall peptidoglycan: transfers peptidoglycan precursor phospho-MurNAc-pentapeptide from UDP-MurNAc-pentapeptide onto the lipid carrier undecaprenyl phosphate, yielding undecaprenyl-pyrophosphoryl-MurNAc-pentapeptide, known as lipid I. The protein is Phospho-N-acetylmuramoyl-pentapeptide-transferase of Moorella thermoacetica (strain ATCC 39073 / JCM 9320).